A 1450-amino-acid chain; its full sequence is Phospholipase B1, membrane-associated (1450 aa).

A signal peptide spans 1–27; the sequence is MESWPGVSLVGLLLLLLLGQGPSQIHG. The Extracellular portion of the chain corresponds to 28–1422; sequence SSGENTSQPQ…KAKENSNTLY (1395 aa). Residues N32, N45, and N179 are each glycosylated (N-linked (GlcNAc...) asparagine). 3 consecutive repeat copies span residues 41 to 351, 366 to 711, and 712 to 1058. A 4 X 308-326 AA approximate repeats region spans residues 41–1407; it reads RTLKNFSFPC…NPFLYTVRNS (1367 aa). Residues S404, D518, and H659 contribute to the active site. N-linked (GlcNAc...) asparagine glycosylation is present at N699. The span at 708–720 shows a compositional bias: polar residues; it reads TKNSNLGHGTSMS. The interval 708–734 is disordered; that stretch reads TKNSNLGHGTSMSCEEKAPSASPPTSV. 10 N-linked (GlcNAc...) asparagine glycosylation sites follow: N787, N801, N844, N880, N926, N1059, N1226, N1280, N1383, and N1387. Repeat 4 spans residues 1068–1407; it reads IENWGSDFLC…NPFLYTVRNS (340 aa). A necessary for membrane localization region spans residues 1408 to 1450; that stretch reads QILLDKAKENSNTLYWAVPVAAVGGLVVGILGMMLWRTVRLVQ. Residues 1423–1443 form a helical membrane-spanning segment; it reads WAVPVAAVGGLVVGILGMMLW. Residues 1444-1450 are Cytoplasmic-facing; sequence RTVRLVQ.

The protein belongs to the 'GDSL' lipolytic enzyme family. Phospholipase B1 subfamily. Undergoes proteolytic cleavage in the ileum. Expressed in the ileum mucosa, Paneth cells spermatocytes, spermatids and sperm (at protein level). Expressed in the ileum, jejunum, esophagus and testis.

It is found in the apical cell membrane. It catalyses the reaction a 1,2-diacyl-sn-glycero-3-phosphocholine + H2O = a 1-acyl-sn-glycero-3-phosphocholine + a fatty acid + H(+). The catalysed reaction is a 1-O-alkyl-2-acyl-sn-glycero-3-phosphocholine + H2O = a 1-O-alkyl-sn-glycero-3-phosphocholine + a fatty acid + H(+). The enzyme catalyses a 1-acyl-sn-glycero-3-phosphocholine + H2O = sn-glycerol 3-phosphocholine + a fatty acid + H(+). It carries out the reaction a triacylglycerol + H2O = a diacylglycerol + a fatty acid + H(+). It catalyses the reaction 1,2-dihexadecanoyl-sn-glycero-3-phosphocholine + H2O = 1-hexadecanoyl-sn-glycero-3-phosphocholine + hexadecanoate + H(+). The catalysed reaction is 1-hexadecanoyl-2-(9Z-octadecenoyl)-sn-glycero-3-phosphocholine + H2O = 1-hexadecanoyl-sn-glycero-3-phosphocholine + (9Z)-octadecenoate + H(+). The enzyme catalyses 1,2-di-(9Z-octadecenoyl)-sn-glycero-3-phosphocholine + H2O = 1-(9Z-octadecenoyl)-sn-glycero-3-phosphocholine + (9Z)-octadecenoate + H(+). It carries out the reaction 1-hexadecanoyl-2-(9Z,12Z-octadecadienoyl)-sn-glycero-3-phosphocholine + H2O = (9Z,12Z)-octadecadienoate + 1-hexadecanoyl-sn-glycero-3-phosphocholine + H(+). It catalyses the reaction 1-hexadecanoyl-2-(9Z,12Z-octadecadienoyl)-sn-glycero-3-phosphocholine + H2O = 2-(9Z,12Z-octadecadienoyl)-sn-glycero-3-phosphocholine + hexadecanoate + H(+). The catalysed reaction is 1-hexadecanoyl-2-(9Z-octadecenoyl)-sn-glycero-3-phosphoethanolamine + H2O = 1-hexadecanoyl-sn-glycero-3-phosphoethanolamine + (9Z)-octadecenoate + H(+). The enzyme catalyses 1-hexadecanoyl-2-(9Z-octadecenoyl)-sn-glycero-3-phospho-(1'-sn-glycerol) + H2O = 1-hexadecanoyl-sn-glycero-3-phospho-(1'-sn-glycerol) + (9Z)-octadecenoate + H(+). It carries out the reaction 1,2-dihexadecanoyl-sn-glycero-3-phosphocholine + 2 H2O = sn-glycerol 3-phosphocholine + 2 hexadecanoate + 2 H(+). It catalyses the reaction 1-O-hexadecyl-2-(9Z)-octadecenoyl-sn-glycero-3-phosphocholine + H2O = 1-O-hexadecyl-sn-glycero-3-phosphocholine + (9Z)-octadecenoate + H(+). The catalysed reaction is 1-hexadecanoyl-sn-glycero-3-phosphocholine + H2O = sn-glycerol 3-phosphocholine + hexadecanoate + H(+). The enzyme catalyses 1,2,3-tri-(9Z-octadecenoyl)-glycerol + H2O = di-(9Z)-octadecenoylglycerol + (9Z)-octadecenoate + H(+). It carries out the reaction 1-hexadecanoyl-2-(9Z)-octadecenoyl-3-octadecanoyl-sn-glycerol + H2O = 1-hexadecanoyl-2-(9Z-octadecenoyl)-sn-glycerol + octadecanoate + H(+). It catalyses the reaction 1,3-dihexadecanoyl-2-(9Z-octadecenoyl)glycerol + H2O = 1,3-dihexadecanoylglycerol + (9Z)-octadecenoate + H(+). The catalysed reaction is 1,3-dihexadecanoyl-2-(9Z-octadecenoyl)glycerol + H2O = 1-hexadecanoyl-2-(9Z-octadecenoyl)-glycerol + hexadecanoate + H(+). The enzyme catalyses 1-hexadecanoyl-2-(9Z)-octadecenoyl-3-octadecanoyl-sn-glycerol + H2O = 1-hexadecanoyl-3-octadecanoyl-sn-glycerol + (9Z)-octadecenoate + H(+). It carries out the reaction 1-hexadecanoyl-2-(9Z)-octadecenoyl-3-octadecanoyl-sn-glycerol + H2O = 2-(9Z-octadecenoyl)-3-octadecanoyl-sn-glycerol + hexadecanoate + H(+). It catalyses the reaction 1-octadecanoyl-2-(9Z,12Z)-octadecadienoyl-sn-glycerol + H2O = 1-octadecanoyl-sn-glycerol + (9Z,12Z)-octadecadienoate + H(+). The catalysed reaction is 1,2-di-(9Z-octadecenoyl)-sn-glycerol + H2O = 1-(9Z-octadecenoyl)-sn-glycerol + (9Z)-octadecenoate + H(+). The enzyme catalyses 2,3-di-(9Z)-octadecenoyl-sn-glycerol + H2O = 3-(9Z-octadecenoyl)-sn-glycerol + (9Z)-octadecenoate + H(+). It carries out the reaction 1,3-di-(9Z-octadecenoyl)-glycerol + H2O = 1-(9Z-octadecenoyl)-glycerol + (9Z)-octadecenoate + H(+). It catalyses the reaction 1-(9Z-octadecenoyl)-glycerol + H2O = glycerol + (9Z)-octadecenoate + H(+). The catalysed reaction is 2-(9Z-octadecenoyl)-glycerol + H2O = glycerol + (9Z)-octadecenoate + H(+). Up-regulated by bile acids such as deoxycholate. Inhibited by diisopropyl fluorophosphate. Functionally, calcium-independent membrane-associated phospholipase that catalyzes complete diacylation of phospholipids by hydrolyzing both sn-1 and sn-2 fatty acyl chains attached to the glycerol backbone (phospholipase B activity). Has dual phospholipase and lysophospholipase activities toward diacylphospholipids. Preferentially cleaves sn-2 ester bonds over sn-1 bonds. Acts as a lipase toward glycerolipid substrates. Hydrolyzes fatty acyl chains of diacylglycerols with preference for the sn-2 position and of triacylglycerols with not positional selectivity. May also hydrolyze long chain retinyl esters such as retinyl palmitate. May contribute to digestion of dietary phospholipids, glycerolipids and retinoids, facilitating lipid absorption at the brush border. The protein is Phospholipase B1, membrane-associated (Plb1) of Rattus norvegicus (Rat).